A 223-amino-acid polypeptide reads, in one-letter code: Thylakoid lumenal 15.0 kDa protein 2, chloroplastic (223 aa).

It localises to the plastid. The protein resides in the chloroplast thylakoid lumen. The sequence is that of Thylakoid lumenal 15.0 kDa protein 2, chloroplastic from Arabidopsis thaliana (Mouse-ear cress).